The sequence spans 238 residues: Small ribosomal subunit protein uS3 (238 aa).

The KH type-2 domain occupies 39-108 (IRKFVKKKLF…NVAVNVIEVK (70 aa)).

It belongs to the universal ribosomal protein uS3 family. Part of the 30S ribosomal subunit. Forms a tight complex with proteins S10 and S14.

Its function is as follows. Binds the lower part of the 30S subunit head. Binds mRNA in the 70S ribosome, positioning it for translation. The sequence is that of Small ribosomal subunit protein uS3 from Alkaliphilus oremlandii (strain OhILAs) (Clostridium oremlandii (strain OhILAs)).